Here is a 493-residue protein sequence, read N- to C-terminus: Glutamyl-tRNA(Gln) amidotransferase subunit A (493 aa).

Active-site charge relay system residues include Lys78 and Ser158. Ser182 acts as the Acyl-ester intermediate in catalysis.

This sequence belongs to the amidase family. GatA subfamily. In terms of assembly, heterotrimer of A, B and C subunits.

The enzyme catalyses L-glutamyl-tRNA(Gln) + L-glutamine + ATP + H2O = L-glutaminyl-tRNA(Gln) + L-glutamate + ADP + phosphate + H(+). Allows the formation of correctly charged Gln-tRNA(Gln) through the transamidation of misacylated Glu-tRNA(Gln) in organisms which lack glutaminyl-tRNA synthetase. The reaction takes place in the presence of glutamine and ATP through an activated gamma-phospho-Glu-tRNA(Gln). The chain is Glutamyl-tRNA(Gln) amidotransferase subunit A from Methylorubrum extorquens (strain CM4 / NCIMB 13688) (Methylobacterium extorquens).